Here is a 233-residue protein sequence, read N- to C-terminus: MTIGIIGAMEEEVELLKNSMPSVEEIVIGGAKFYVGEIAGKEVVLLESGIGKVNAALGTTLMADRFKPEVIINTGSAGGMAEGLAVGDVIISDRLAYGDVDVTEFGYTYGQVPRMPAFYQGDAVLLKKAETIYREYFAASENKAVYGLVVTNDSFIMRPDQHETIRTFFPDVKAVEMEAAAIAQVAYQFDIPFLIIRAISDLANQEATISFDEFIHLAAKQSATCIIELLKTI.

The active-site Proton acceptor is E12. Substrate is bound by residues G78, I156, and 177-178 (ME). The active-site Proton donor is the D201.

The protein belongs to the PNP/UDP phosphorylase family. MtnN subfamily.

The enzyme catalyses S-adenosyl-L-homocysteine + H2O = S-(5-deoxy-D-ribos-5-yl)-L-homocysteine + adenine. It carries out the reaction S-methyl-5'-thioadenosine + H2O = 5-(methylsulfanyl)-D-ribose + adenine. It catalyses the reaction 5'-deoxyadenosine + H2O = 5-deoxy-D-ribose + adenine. Its pathway is amino-acid biosynthesis; L-methionine biosynthesis via salvage pathway; S-methyl-5-thio-alpha-D-ribose 1-phosphate from S-methyl-5'-thioadenosine (hydrolase route): step 1/2. Catalyzes the irreversible cleavage of the glycosidic bond in both 5'-methylthioadenosine (MTA) and S-adenosylhomocysteine (SAH/AdoHcy) to adenine and the corresponding thioribose, 5'-methylthioribose and S-ribosylhomocysteine, respectively. Also cleaves 5'-deoxyadenosine, a toxic by-product of radical S-adenosylmethionine (SAM) enzymes, into 5-deoxyribose and adenine. In Listeria monocytogenes serotype 4b (strain CLIP80459), this protein is 5'-methylthioadenosine/S-adenosylhomocysteine nucleosidase.